The chain runs to 404 residues: Keratin, type I cuticular Ha3-I (404 aa).

Residues 1 to 56 (MSYSCGLPNLSCRTSCSSRPCVPPSCHGCTLPGACNIPANVSNCNWFCEGSFNGSE) are head. An IF rod domain is found at 56 to 367 (EKETMQFLND…SLLESEDCKL (312 aa)). A coil 1A region spans residues 57–91 (KETMQFLNDRLASYLEKVRQLERDNAELENLIRER). The tract at residues 92-102 (SQQQEPLVCAS) is linker 1. Residues 103-203 (YQSYFKTIEE…HEQEVNTLRC (101 aa)) form a coil 1B region. Residues 204–219 (QLGGRLNVEVDAAPAV) form a linker 12 region. Residues 220–363 (DLNQVLNETR…NTYRSLLESE (144 aa)) form a coil 2 region. The segment at 364-404 (DCKLPSNPCAITNACDKSTGPCISNPCGPRARCGPCNTFGY) is tail.

Belongs to the intermediate filament family.

The polypeptide is Keratin, type I cuticular Ha3-I (Pan troglodytes (Chimpanzee)).